The primary structure comprises 63 residues: Large ribosomal subunit protein uL30 (63 aa).

It belongs to the universal ribosomal protein uL30 family. As to quaternary structure, part of the 50S ribosomal subunit.

This Natranaerobius thermophilus (strain ATCC BAA-1301 / DSM 18059 / JW/NM-WN-LF) protein is Large ribosomal subunit protein uL30.